A 484-amino-acid polypeptide reads, in one-letter code: Ribosomal protein uS12 methylthiotransferase RimO (484 aa).

An MTTase N-terminal domain is found at 8–119 (RRVAMVTLGC…LAERLDDVLA (112 aa)). Residues Cys-17, Cys-53, Cys-82, Cys-184, Cys-188, and Cys-191 each contribute to the [4Fe-4S] cluster site. One can recognise a Radical SAM core domain in the interval 170–401 (LDDSPLAALK…ALADELVAQR (232 aa)). The 67-residue stretch at 403–469 (EDRVGTEVRV…GVDLVVRPVG (67 aa)) folds into the TRAM domain.

Belongs to the methylthiotransferase family. RimO subfamily. Requires [4Fe-4S] cluster as cofactor.

It localises to the cytoplasm. It carries out the reaction L-aspartate(89)-[ribosomal protein uS12]-hydrogen + (sulfur carrier)-SH + AH2 + 2 S-adenosyl-L-methionine = 3-methylsulfanyl-L-aspartate(89)-[ribosomal protein uS12]-hydrogen + (sulfur carrier)-H + 5'-deoxyadenosine + L-methionine + A + S-adenosyl-L-homocysteine + 2 H(+). Its function is as follows. Catalyzes the methylthiolation of an aspartic acid residue of ribosomal protein uS12. The polypeptide is Ribosomal protein uS12 methylthiotransferase RimO (Saccharopolyspora erythraea (strain ATCC 11635 / DSM 40517 / JCM 4748 / NBRC 13426 / NCIMB 8594 / NRRL 2338)).